The chain runs to 736 residues: 1,4-alpha-glucan branching enzyme GlgB (736 aa).

The active-site Nucleophile is aspartate 419. Residue glutamate 472 is the Proton donor of the active site.

Belongs to the glycosyl hydrolase 13 family. GlgB subfamily. Monomer.

The enzyme catalyses Transfers a segment of a (1-&gt;4)-alpha-D-glucan chain to a primary hydroxy group in a similar glucan chain.. Its pathway is glycan biosynthesis; glycogen biosynthesis. Catalyzes the formation of the alpha-1,6-glucosidic linkages in glycogen by scission of a 1,4-alpha-linked oligosaccharide from growing alpha-1,4-glucan chains and the subsequent attachment of the oligosaccharide to the alpha-1,6 position. This Rhizobium meliloti (strain 1021) (Ensifer meliloti) protein is 1,4-alpha-glucan branching enzyme GlgB.